Reading from the N-terminus, the 360-residue chain is sn-glycerol-3-phosphate import ATP-binding protein UgpC (360 aa).

One can recognise an ABC transporter domain in the interval 4-235; sequence LSLKGVRKSY…PATTFVASFI (232 aa). 37-44 contributes to the ATP binding site; sequence GPSGCGKS.

This sequence belongs to the ABC transporter superfamily. sn-glycerol-3-phosphate importer (TC 3.A.1.1.3) family. In terms of assembly, the complex is composed of two ATP-binding proteins (UgpC), two transmembrane proteins (UgpA and UgpE) and a solute-binding protein (UgpB).

The protein resides in the cell inner membrane. It carries out the reaction sn-glycerol 3-phosphate(out) + ATP + H2O = sn-glycerol 3-phosphate(in) + ADP + phosphate + H(+). Its function is as follows. Part of the ABC transporter complex UgpBAEC involved in sn-glycerol-3-phosphate (G3P) import. Responsible for energy coupling to the transport system. This chain is sn-glycerol-3-phosphate import ATP-binding protein UgpC, found in Burkholderia pseudomallei (strain 1710b).